Consider the following 159-residue polypeptide: ATP synthase subunit b (159 aa).

The helical transmembrane segment at 2–22 threads the bilayer; the sequence is EFNLVTIGFTIVNFIILMLIL.

Belongs to the ATPase B chain family. As to quaternary structure, F-type ATPases have 2 components, F(1) - the catalytic core - and F(0) - the membrane proton channel. F(1) has five subunits: alpha(3), beta(3), gamma(1), delta(1), epsilon(1). F(0) has three main subunits: a(1), b(2) and c(10-14). The alpha and beta chains form an alternating ring which encloses part of the gamma chain. F(1) is attached to F(0) by a central stalk formed by the gamma and epsilon chains, while a peripheral stalk is formed by the delta and b chains.

It localises to the cell membrane. Functionally, f(1)F(0) ATP synthase produces ATP from ADP in the presence of a proton or sodium gradient. F-type ATPases consist of two structural domains, F(1) containing the extramembraneous catalytic core and F(0) containing the membrane proton channel, linked together by a central stalk and a peripheral stalk. During catalysis, ATP synthesis in the catalytic domain of F(1) is coupled via a rotary mechanism of the central stalk subunits to proton translocation. In terms of biological role, component of the F(0) channel, it forms part of the peripheral stalk, linking F(1) to F(0). The polypeptide is ATP synthase subunit b (Clostridium acetobutylicum (strain ATCC 824 / DSM 792 / JCM 1419 / IAM 19013 / LMG 5710 / NBRC 13948 / NRRL B-527 / VKM B-1787 / 2291 / W)).